The chain runs to 417 residues: Gamma-glutamyl phosphate reductase (417 aa).

The protein belongs to the gamma-glutamyl phosphate reductase family.

The protein resides in the cytoplasm. The enzyme catalyses L-glutamate 5-semialdehyde + phosphate + NADP(+) = L-glutamyl 5-phosphate + NADPH + H(+). The protein operates within amino-acid biosynthesis; L-proline biosynthesis; L-glutamate 5-semialdehyde from L-glutamate: step 2/2. Functionally, catalyzes the NADPH-dependent reduction of L-glutamate 5-phosphate into L-glutamate 5-semialdehyde and phosphate. The product spontaneously undergoes cyclization to form 1-pyrroline-5-carboxylate. In Erwinia tasmaniensis (strain DSM 17950 / CFBP 7177 / CIP 109463 / NCPPB 4357 / Et1/99), this protein is Gamma-glutamyl phosphate reductase.